Here is a 649-residue protein sequence, read N- to C-terminus: Golgin subfamily A member 6-like protein 26 (649 aa).

Disordered stretches follow at residues methionine 1–alanine 94, glutamine 300–glutamate 330, glutamate 358–arginine 440, lysine 455–glutamate 572, and glutamate 584–glutamine 620. The span at histidine 10–proline 23 shows a compositional bias: low complexity. Residues methionine 25–proline 46 are compositionally biased toward basic and acidic residues. 2 stretches are compositionally biased toward polar residues: residues glutamine 47 to serine 57 and asparagine 65 to glycine 77. The span at serine 80–alanine 94 shows a compositional bias: basic and acidic residues. Residues leucine 151 to histidine 644 are a coiled coil.

This sequence belongs to the GOLGA6 family.

This chain is Golgin subfamily A member 6-like protein 26 (GOLGA6L26), found in Homo sapiens (Human).